A 453-amino-acid polypeptide reads, in one-letter code: Bifunctional protein GlmU (453 aa).

The interval 1–226 (MVAVAILAAG…YLEITGINDR (226 aa)) is pyrophosphorylase. UDP-N-acetyl-alpha-D-glucosamine-binding positions include 7 to 10 (LAAG), Lys-21, Gln-73, and 78 to 79 (GT). Asp-103 contacts Mg(2+). The UDP-N-acetyl-alpha-D-glucosamine site is built by Gly-140, Glu-155, Asn-170, and Asn-224. Asn-224 contacts Mg(2+). The tract at residues 227 to 247 (KQLAMANGILQNRVKDHWMAQ) is linker. Residues 248-453 (GVTLIDPDSI…EWKKTIESKK (206 aa)) form an N-acetyltransferase region. UDP-N-acetyl-alpha-D-glucosamine contacts are provided by Arg-329 and Lys-347. His-359 acts as the Proton acceptor in catalysis. Positions 362 and 373 each coordinate UDP-N-acetyl-alpha-D-glucosamine. Acetyl-CoA-binding positions include Ala-376, 382 to 383 (NY), Ala-419, and Arg-436.

The protein in the N-terminal section; belongs to the N-acetylglucosamine-1-phosphate uridyltransferase family. In the C-terminal section; belongs to the transferase hexapeptide repeat family. In terms of assembly, homotrimer. It depends on Mg(2+) as a cofactor.

It localises to the cytoplasm. The catalysed reaction is alpha-D-glucosamine 1-phosphate + acetyl-CoA = N-acetyl-alpha-D-glucosamine 1-phosphate + CoA + H(+). It carries out the reaction N-acetyl-alpha-D-glucosamine 1-phosphate + UTP + H(+) = UDP-N-acetyl-alpha-D-glucosamine + diphosphate. It participates in nucleotide-sugar biosynthesis; UDP-N-acetyl-alpha-D-glucosamine biosynthesis; N-acetyl-alpha-D-glucosamine 1-phosphate from alpha-D-glucosamine 6-phosphate (route II): step 2/2. The protein operates within nucleotide-sugar biosynthesis; UDP-N-acetyl-alpha-D-glucosamine biosynthesis; UDP-N-acetyl-alpha-D-glucosamine from N-acetyl-alpha-D-glucosamine 1-phosphate: step 1/1. Its pathway is bacterial outer membrane biogenesis; LPS lipid A biosynthesis. In terms of biological role, catalyzes the last two sequential reactions in the de novo biosynthetic pathway for UDP-N-acetylglucosamine (UDP-GlcNAc). The C-terminal domain catalyzes the transfer of acetyl group from acetyl coenzyme A to glucosamine-1-phosphate (GlcN-1-P) to produce N-acetylglucosamine-1-phosphate (GlcNAc-1-P), which is converted into UDP-GlcNAc by the transfer of uridine 5-monophosphate (from uridine 5-triphosphate), a reaction catalyzed by the N-terminal domain. This chain is Bifunctional protein GlmU, found in Rippkaea orientalis (strain PCC 8801 / RF-1) (Cyanothece sp. (strain PCC 8801)).